A 315-amino-acid chain; its full sequence is ATP synthase gamma chain (315 aa).

This sequence belongs to the ATPase gamma chain family. As to quaternary structure, F-type ATPases have 2 components, CF(1) - the catalytic core - and CF(0) - the membrane proton channel. CF(1) has five subunits: alpha(3), beta(3), gamma(1), delta(1), epsilon(1). CF(0) has three main subunits: a, b and c.

The protein localises to the cell membrane. Produces ATP from ADP in the presence of a proton gradient across the membrane. The gamma chain is believed to be important in regulating ATPase activity and the flow of protons through the CF(0) complex. The polypeptide is ATP synthase gamma chain (Latilactobacillus sakei subsp. sakei (strain 23K) (Lactobacillus sakei subsp. sakei)).